The sequence spans 1312 residues: Multidrug resistance protein 3 (1312 aa).

The chain crosses the membrane as a helical span at residues 51–71 (GFIDYILLIGGIIGAMAAGVL). The region spanning 59–369 (IGGIIGAMAA…VAMPINALST (311 aa)) is the ABC transmembrane type-1 1 domain. Asparagine 98 carries an N-linked (GlcNAc...) asparagine glycan. 5 helical membrane-spanning segments follow: residues 127-147 (IYFAIGTTVGMFLMHFCFFVL), 197-217 (KFGVLFQTICGFIAGYAIGFS), 224-244 (LVIMAVTPFMLITVLFLGFFA), 302-322 (VVGVGLGMLLFFMMGSLALGS), and 344-364 (MVVFMSVLMATMSIAQVAMPI). Residues 404-643 (IKLEDVQFRY…KATYYGLVKR (240 aa)) form the ABC transporter 1 domain. 439–446 (GASGCGKS) is a binding site for ATP. The region spanning 724–1033 (LLSFLGLIGG…LGQMIPDVGK (310 aa)) is the ABC transmembrane type-1 2 domain. A run of 2 helical transmembrane segments spans residues 725-745 (LSFLGLIGGIGAGAVFPFYMI) and 776-796 (IWILLFGLAVFVTTYMYLGLF). N-linked (GlcNAc...) asparagine glycosylation is present at asparagine 819. 3 consecutive transmembrane segments (helical) span residues 852–872 (VGNVVNTLSSVGFGVGIAFYY), 874–894 (WKVALCVMAIAPVLIVIVFLN), and 958–978 (AFVSAANTFVTSCISAYSFYI). An ABC transporter 2 domain is found at 1068-1307 (IEFKDICFRY…KGFYYTLAMQ (240 aa)). 1103–1110 (GASGCGKS) contributes to the ATP binding site.

This sequence belongs to the ABC transporter superfamily. ABCB family. Multidrug resistance exporter (TC 3.A.1.201) subfamily.

It is found in the membrane. The catalysed reaction is ATP + H2O + xenobioticSide 1 = ADP + phosphate + xenobioticSide 2.. Functionally, energy-dependent efflux pump responsible for decreased drug accumulation in multidrug resistance parasites. The protein is Multidrug resistance protein 3 of Entamoeba histolytica (strain ATCC 30459 / HM-1:IMSS / ABRM).